The chain runs to 504 residues: U3 snoRNP-associated protein-like YAO (504 aa).

The disordered stretch occupies residues Met1 to Glu120. Positions Gly20–Lys33 are enriched in basic and acidic residues. 2 stretches are compositionally biased toward acidic residues: residues Asp41–Glu54 and Glu70–Thr81. Basic and acidic residues predominate over residues Leu89–Glu106. A compositionally biased stretch (acidic residues) spans Glu107–Glu120. WD repeat units lie at residues Lys159–Tyr198, Asn220–Ala259, Gly262–Glu301, Gly304–Tyr342, Ala344–Val382, Ser413–Leu452, and Pro456–Val496.

It belongs to the WD repeat RRP9 family. Expressed in tissues with active in cell division such as shoot apexes, root tips, lateral root primordia, embryos, endosperm, pollen grains and embryo sacs.

It localises to the nucleus. It is found in the nucleolus. Component of a nucleolar small nuclear ribonucleoprotein particle (snoRNP) thought to participate in the processing and modification of pre-ribosomal RNA. Essential for embryogenesis. Plays a critical role in embryo sac development and gametic cell fate. Required for the correct positioning of the first division plane of zygote. May function during early embryogenesis. In Arabidopsis thaliana (Mouse-ear cress), this protein is U3 snoRNP-associated protein-like YAO.